The sequence spans 346 residues: UDP-N-acetylenolpyruvoylglucosamine reductase (346 aa).

In terms of domain architecture, FAD-binding PCMH-type spans 18-189; the sequence is LHAQARAFIA…VSVVFALKTH (172 aa). Arg-165 is a catalytic residue. Ser-240 (proton donor) is an active-site residue. The active site involves Glu-336.

It belongs to the MurB family. It depends on FAD as a cofactor.

The protein localises to the cytoplasm. The catalysed reaction is UDP-N-acetyl-alpha-D-muramate + NADP(+) = UDP-N-acetyl-3-O-(1-carboxyvinyl)-alpha-D-glucosamine + NADPH + H(+). Its pathway is cell wall biogenesis; peptidoglycan biosynthesis. Its function is as follows. Cell wall formation. The protein is UDP-N-acetylenolpyruvoylglucosamine reductase of Neisseria gonorrhoeae (strain ATCC 700825 / FA 1090).